Consider the following 93-residue polypeptide: Cobalt transport protein CbiN (93 aa).

The next 2 helical transmembrane spans lie at 5 to 25 (LMLLAMVVALVILPFFINHGG) and 63 to 83 (LLFTLQGSLGAAVIFYILGYC).

The protein belongs to the CbiN family. Forms an energy-coupling factor (ECF) transporter complex composed of an ATP-binding protein (A component, CbiO), a transmembrane protein (T component, CbiQ) and 2 possible substrate-capture proteins (S components, CbiM and CbiN) of unknown stoichimetry.

The protein localises to the cell inner membrane. It participates in cofactor biosynthesis; adenosylcobalamin biosynthesis. Its function is as follows. Part of the energy-coupling factor (ECF) transporter complex CbiMNOQ involved in cobalt import. The sequence is that of Cobalt transport protein CbiN from Salmonella arizonae (strain ATCC BAA-731 / CDC346-86 / RSK2980).